The sequence spans 126 residues: Large ribosomal subunit protein uL22 (126 aa).

This sequence belongs to the universal ribosomal protein uL22 family. As to quaternary structure, part of the 50S ribosomal subunit.

Its function is as follows. This protein binds specifically to 23S rRNA; its binding is stimulated by other ribosomal proteins, e.g. L4, L17, and L20. It is important during the early stages of 50S assembly. It makes multiple contacts with different domains of the 23S rRNA in the assembled 50S subunit and ribosome. In terms of biological role, the globular domain of the protein is located near the polypeptide exit tunnel on the outside of the subunit, while an extended beta-hairpin is found that lines the wall of the exit tunnel in the center of the 70S ribosome. This Phenylobacterium zucineum (strain HLK1) protein is Large ribosomal subunit protein uL22.